We begin with the raw amino-acid sequence, 712 residues long: Potassium transporter 1 (712 aa).

Residues methionine 1 to threonine 19 lie on the Cytoplasmic side of the membrane. A helical membrane pass occupies residues leucine 20–leucine 40. The Extracellular segment spans residues serine 41–glycine 67. The chain crosses the membrane as a helical span at residues valine 68–valine 88. The Cytoplasmic portion of the chain corresponds to leucine 89–lysine 154. Residues cysteine 155 to proline 175 traverse the membrane as a helical segment. Topologically, residues threonine 176–lysine 189 are extracellular. A helical membrane pass occupies residues isoleucine 190–phenylalanine 210. The Cytoplasmic portion of the chain corresponds to serine 211–arginine 219. Residues valine 220–valine 240 form a helical membrane-spanning segment. Topologically, residues tyrosine 241–glycine 267 are extracellular. The chain crosses the membrane as a helical span at residues valine 268–phenylalanine 288. The Cytoplasmic portion of the chain corresponds to alanine 289 to lysine 300. The helical transmembrane segment at valine 301–phenylalanine 321 threads the bilayer. At leucine 322–proline 340 the chain is on the extracellular side. Residues valine 341–isoleucine 361 traverse the membrane as a helical segment. Residues serine 362–glutamine 392 lie on the Cytoplasmic side of the membrane. The chain crosses the membrane as a helical span at residues isoleucine 393–leucine 413. Residues arginine 414–glycine 424 are Extracellular-facing. A helical membrane pass occupies residues leucine 425–valine 445. Residues tryptophan 446–arginine 449 are Cytoplasmic-facing. Residues isoleucine 450 to serine 470 form a helical membrane-spanning segment. The Extracellular segment spans residues cysteine 471–lysine 474. The chain crosses the membrane as a helical span at residues valine 475–isoleucine 495. At tryptophan 496–valine 712 the chain is on the cytoplasmic side.

It belongs to the HAK/KUP transporter (TC 2.A.72.3) family. As to expression, detected in the whole mature plant but preferentially expressed in roots and stems, and in potassium-starved plants.

Its subcellular location is the cell membrane. High-affinity potassium transporter that could play a major role in the uptake of potassium from the rhizosphere. May act as a low-affinity potassium transporter under high potassium concentrations. Could also transport rubidium. The sequence is that of Potassium transporter 1 (POT1) from Arabidopsis thaliana (Mouse-ear cress).